We begin with the raw amino-acid sequence, 441 residues long: Heat shock factor protein 4 (441 aa).

The DNA-binding element occupies 17–121 (NVPAFLTKLW…EHLLEHIKRK (105 aa)). The segment at 130–205 (TKVRQEDLSK…QMQSNSPSTV (76 aa)) is hydrophobic repeat HR-A/B.

This sequence belongs to the HSF family. Predominantly expressed in the eye.

It localises to the nucleus. Functionally, heat-shock transcription factor that specifically binds heat shock promoter elements (HSE). Required for denucleation and organelle rupture and degradation that occur during eye lens terminal differentiation, when fiber cells that compose the lens degrade all membrane-bound organelles in order to provide lens with transparency to allow the passage of light. In this process, may regulate denucleation of lens fiber cells in part by activating dnase1l1l and dnase2b transcription. May be involved in DNA repair through the transcriptional regulation of rad51. May up-regulate TP53 protein in lens fiber cells, possibly through protein stabilization. In the eye lens, controls the expression of alpha-crystallin B chain/CRYAB and consequently may be involved in the regulation of lysosomal acidification. In Danio rerio (Zebrafish), this protein is Heat shock factor protein 4.